The sequence spans 119 residues: Beta-2-microglobulin (119 aa).

The first 20 residues, 1–20 (MARSVVAALLVLLSLSGLEA), serve as a signal peptide directing secretion. An Ig-like C1-type domain is found at 25-114 (PKIQVYSRHP…VTFPTPKTVK (90 aa)). A disulfide bond links cysteine 45 and cysteine 100.

It belongs to the beta-2-microglobulin family. In terms of assembly, heterodimer of an alpha chain and a beta chain. Beta-2-microglobulin is the beta-chain of major histocompatibility complex class I molecules.

It is found in the secreted. In terms of biological role, component of the class I major histocompatibility complex (MHC). Involved in the presentation of peptide antigens to the immune system. The protein is Beta-2-microglobulin (B2M) of Saimiri boliviensis boliviensis (Bolivian squirrel monkey).